Reading from the N-terminus, the 111-residue chain is Large ribosomal subunit protein uL24 (111 aa).

The interval 43–62 (TRHKKKDQTTKRAAKQSTGK) is disordered.

This sequence belongs to the universal ribosomal protein uL24 family. In terms of assembly, part of the 50S ribosomal subunit.

Its function is as follows. One of two assembly initiator proteins, it binds directly to the 5'-end of the 23S rRNA, where it nucleates assembly of the 50S subunit. One of the proteins that surrounds the polypeptide exit tunnel on the outside of the subunit. This Mycoplasma pneumoniae (strain ATCC 29342 / M129 / Subtype 1) (Mycoplasmoides pneumoniae) protein is Large ribosomal subunit protein uL24.